The sequence spans 691 residues: MGCAESKDGEGEAQNNRPKYRSCTDTCWLAIYIIFWLFLIVIAIFSFVYGNPLRIINGYDSFGNTCGVKYNEKFQGFPLSGMNTLDKPELFYFDVKELKKSLKICVKSCPAKTMTKGSELLEYYSQTGTQLCKYDYNMQQLTTAGNDAKTFNFLGPCPSFPVHESSPVLHRCVPKGTGEKVQNYYDMLNNWDVAQQFVGDIYSTWHIIAMVCGLALLISIALVTMMHWLSRIVSWIICVLVIVASVALTVALWYAYYNIRNKSGVNTQYSMLEEFVRNQQAVLTLAVLATITMIILIVVIYFLKNKLAGLSALFEEAGQCMMNLPGLLIAPLLAFLVLIAFLSFWVAVIICLATASSPGQSPIAPFDNSKAHQQPLPANALFVSNSTDVNDLRPNARVEYADAGVLRSMFWIYVVGLIWTVEFIFACQQFALAAAVAFWYFQKPTSTPTFYAIGKLVKYHLGTVAKGSFVITIFKIPRLILTYLYAKLKKGEDKGSECAACCLKCCICGFWLLEKFIRFLNHNAYTVVAIESINFCPAAGIAWNAMATNVLQVATINSVGDFILFLGKVVVAALSGLIGIVLLKDKPGLNFYMAPVIIIIIFSFFIAHIILSLFEMVVDTLFLCVCEDKTLNGRSGRWAQSNLAKLVGEEPLQPGEEPPIEVVQMMPINKQPFSITRLPQSDPEVAPMSAD.

Positions 1-10 (MGCAESKDGE) are enriched in basic and acidic residues. Residues 1–20 (MGCAESKDGEGEAQNNRPKY) are disordered. A run of 3 helical transmembrane segments spans residues 28–48 (WLAI…FSFV), 205–225 (WHII…LVTM), and 232–252 (IVSW…TVAL). Residue N261 is glycosylated (N-linked (GlcNAc...) asparagine). 2 helical membrane-spanning segments follow: residues 282 to 302 (VLTL…VIYF) and 332 to 352 (LLAF…IICL). N385 carries N-linked (GlcNAc...) asparagine glycosylation. The next 4 membrane-spanning stretches (helical) occupy residues 408–428 (SMFW…FACQ), 527–547 (VVAI…NAMA), 562–582 (FILF…GIVL), and 591–611 (FYMA…HIIL).

This sequence belongs to the CTL (choline transporter-like) family.

The protein resides in the membrane. This Drosophila melanogaster (Fruit fly) protein is Choline transporter-like 1.